Consider the following 331-residue polypeptide: Reticulocalbin-1 (331 aa).

An N-terminal signal peptide occupies residues 1–29; sequence MARGGRGRRLGLALGLLLALVLAPRVLRA. N-linked (GlcNAc...) asparagine glycosylation is present at Asn53. At Ser55 the chain carries Phosphoserine. Thr76 is modified (phosphothreonine). EF-hand domains follow at residues 79–114, 115–150, 166–201, 203–238, 244–279, and 280–315; these read ESKE…VQKR, YIFD…YYLG, KMLP…EEFE, MKEI…HEEN, WVLS…QDYD, and HAQA…FVGS. Ser80 is modified (phosphoserine; by FAM20C). Positions 92, 94, 96, 103, 128, 130, 132, 134, 139, 179, 181, 183, 185, 190, 216, 218, 220, 227, 257, 259, 261, 263, 268, 293, 295, 297, 299, and 304 each coordinate Ca(2+). A Prevents secretion from ER motif is present at residues 328–331; that stretch reads HDEL.

Belongs to the CREC family. In terms of processing, O-glycosylated. O-mannosylated by POMT1 and POMT2 and elongated by POMGNT1.

It localises to the endoplasmic reticulum lumen. May regulate calcium-dependent activities in the endoplasmic reticulum lumen or post-ER compartment. In Homo sapiens (Human), this protein is Reticulocalbin-1 (RCN1).